A 919-amino-acid chain; its full sequence is MFS-type transporter clz9 (919 aa).

The segment covering 1 to 11 (MAASTKPTTKL) has biased composition (polar residues). The segment at 1–33 (MAASTKPTTKLSTEEDDVSRRDSESSADFMKSN) is disordered. The chain crosses the membrane as a helical span at residues 69-89 (VVASFAAAISPFSTSTYYPVV). An N-linked (GlcNAc...) asparagine glycan is attached at asparagine 104. Helical transmembrane passes span 132–152 (PMFL…ALQN), 192–212 (LIYA…IGGL), and 222–242 (VFWF…IFFG). N-linked (GlcNAc...) asparagine glycosylation is present at asparagine 260. 4 consecutive transmembrane segments (helical) span residues 303–323 (FILS…TSVL), 333–353 (YDAV…LLAY), 393–413 (LGFV…YGWQ), and 418–438 (APLA…TGVM). A glycan (N-linked (GlcNAc...) asparagine) is linked at asparagine 461. A helical transmembrane segment spans residues 465–485 (LLLGAGAVAVVGPLNKSAGIG). A DDE-1 domain is found at 641–809 (REWVTLIQGI…FTSANICSSF (169 aa)). Positions 840-897 (EAPWEAKTPSNRKKKQIQKRGTLTKGEGEDTLAQKEADQQIEREQRQGGEQSGRSRQA) are disordered. The segment covering 865–886 (GEGEDTLAQKEADQQIEREQRQ) has biased composition (basic and acidic residues). Low complexity predominate over residues 887 to 896 (GGEQSGRSRQ). Residue asparagine 915 is glycosylated (N-linked (GlcNAc...) asparagine).

This sequence belongs to the major facilitator superfamily. CAR1 family.

The protein resides in the membrane. Its function is as follows. MFS-type transporter; part of the gene cluster that mediates the biosynthesis of squalestatin S1 (SQS1, also known as zaragozic acid A), a heavily oxidized fungal polyketide that offers potent cholesterol lowering activity by targeting squalene synthase (SS). The sequence is that of MFS-type transporter clz9 from Cochliobolus lunatus (Filamentous fungus).